Consider the following 287-residue polypeptide: Nucleotide-binding protein Ajs_0902 (287 aa).

10–17 is an ATP binding site; it reads GMSGSGKS. 59 to 62 is a GTP binding site; sequence DVRS.

This sequence belongs to the RapZ-like family.

Its function is as follows. Displays ATPase and GTPase activities. The protein is Nucleotide-binding protein Ajs_0902 of Acidovorax sp. (strain JS42).